Consider the following 387-residue polypeptide: 3-ketoacyl-CoA thiolase (387 aa).

Residue C91 is the Acyl-thioester intermediate of the active site. Catalysis depends on proton acceptor residues H343 and C373.

The protein belongs to the thiolase-like superfamily. Thiolase family. Heterotetramer of two alpha chains (FadB) and two beta chains (FadA).

It localises to the cytoplasm. It carries out the reaction an acyl-CoA + acetyl-CoA = a 3-oxoacyl-CoA + CoA. The protein operates within lipid metabolism; fatty acid beta-oxidation. Its function is as follows. Catalyzes the final step of fatty acid oxidation in which acetyl-CoA is released and the CoA ester of a fatty acid two carbons shorter is formed. This is 3-ketoacyl-CoA thiolase from Shewanella denitrificans (strain OS217 / ATCC BAA-1090 / DSM 15013).